The sequence spans 571 residues: Urease subunit alpha (571 aa).

Residues 129 to 571 (GGIDTHIHFI…LPMAQRYFLF (443 aa)) form the Urease domain. His-134, His-136, and Lys-217 together coordinate Ni(2+). N6-carboxylysine is present on Lys-217. His-219 provides a ligand contact to substrate. Ni(2+) contacts are provided by His-246 and His-272. The active-site Proton donor is the His-320. Asp-360 provides a ligand contact to Ni(2+).

This sequence belongs to the metallo-dependent hydrolases superfamily. Urease alpha subunit family. Heterotrimer of UreA (gamma), UreB (beta) and UreC (alpha) subunits. Three heterotrimers associate to form the active enzyme. Ni cation is required as a cofactor. In terms of processing, carboxylation allows a single lysine to coordinate two nickel ions.

The protein resides in the cytoplasm. The catalysed reaction is urea + 2 H2O + H(+) = hydrogencarbonate + 2 NH4(+). It participates in nitrogen metabolism; urea degradation; CO(2) and NH(3) from urea (urease route): step 1/1. This chain is Urease subunit alpha, found in Cupriavidus pinatubonensis (strain JMP 134 / LMG 1197) (Cupriavidus necator (strain JMP 134)).